We begin with the raw amino-acid sequence, 76 residues long: ATP synthase subunit 9, mitochondrial (76 aa).

At M1 the chain carries N-formylmethionine. The next 2 helical transmembrane spans lie at 14–34 (ISTI…AALI) and 52–72 (ILGF…SFLL).

Belongs to the ATPase C chain family. F-type ATPases have 2 components, CF(1) - the catalytic core - and CF(0) - the membrane proton channel. In yeast, the dimeric form of ATP synthase consists of 18 polypeptides: alpha, beta, gamma, delta, epsilon, 4 (B), 5 (OSCP), 6 (A), 8, 9 (C), d, E (Tim11), f, g, h, i, j and k.

It localises to the mitochondrion membrane. Functionally, mitochondrial membrane ATP synthase (F(1)F(0) ATP synthase or Complex V) produces ATP from ADP in the presence of a proton gradient across the membrane which is generated by electron transport complexes of the respiratory chain. F-type ATPases consist of two structural domains, F(1) - containing the extramembraneous catalytic core and F(0) - containing the membrane proton channel, linked together by a central stalk and a peripheral stalk. During catalysis, ATP synthesis in the catalytic domain of F(1) is coupled via a rotary mechanism of the central stalk subunits to proton translocation. Part of the complex F(0) domain. A homomeric c-ring of probably 10 subunits is part of the complex rotary element. This chain is ATP synthase subunit 9, mitochondrial (ATP9), found in Saccharomyces paradoxus (Yeast).